Here is a 136-residue protein sequence, read N- to C-terminus: Small ribosomal subunit protein eS19 (136 aa).

Lys23 carries the post-translational modification N6-acetyllysine. An Omega-N-methylarginine modification is found at Arg67. N6-acetyllysine occurs at positions 111 and 115. Positions 116-136 (DQDGGRKLTPQGQRDLDRIAG) are disordered.

Belongs to the eukaryotic ribosomal protein eS19 family. Component of the small ribosomal subunit. Part of the small subunit (SSU) processome, composed of more than 70 proteins and the RNA chaperone small nucleolar RNA (snoRNA) U3. Interacts with RPS19BP1; the interaction is direct and mediates the integration of RPS19 in state post-A1. Interacts with RPS19BP1.

The protein resides in the cytoplasm. The protein localises to the nucleus. Its subcellular location is the nucleolus. In terms of biological role, component of the small ribosomal subunit. The ribosome is a large ribonucleoprotein complex responsible for the synthesis of proteins in the cell. Required for pre-rRNA processing and maturation of 40S ribosomal subunits. Part of the small subunit (SSU) processome, first precursor of the small eukaryotic ribosomal subunit. During the assembly of the SSU processome in the nucleolus, many ribosome biogenesis factors, an RNA chaperone and ribosomal proteins associate with the nascent pre-rRNA and work in concert to generate RNA folding, modifications, rearrangements and cleavage as well as targeted degradation of pre-ribosomal RNA by the RNA exosome. The sequence is that of Small ribosomal subunit protein eS19 (RPS19) from Sus scrofa (Pig).